Reading from the N-terminus, the 227-residue chain is MTDSNRGGAAAHSLHAGVYPGNLFMVVAPSGAGKSTLVNALLSKDPEICLSISYTTRKPRSGEQDGQHYHFTTVEDFRARHASHEFLESAEVHGNYYGTSRVWIEEQMKSGHDVLLEIDWQGAQQVKKQFRNAVGIFILPPSLAALEERLKKRGQDEPNVITRRLLAAGSEIAHAAEAEYVVINETFEHALAELECIVAATRLRFTSQYARHAELFVELGIHLPHAE.

A Guanylate kinase-like domain is found at 21 to 199; the sequence is GNLFMVVAPS…ALAELECIVA (179 aa). 28–35 is an ATP binding site; the sequence is APSGAGKS.

The protein belongs to the guanylate kinase family.

Its subcellular location is the cytoplasm. The enzyme catalyses GMP + ATP = GDP + ADP. Functionally, essential for recycling GMP and indirectly, cGMP. This is Guanylate kinase from Burkholderia thailandensis (strain ATCC 700388 / DSM 13276 / CCUG 48851 / CIP 106301 / E264).